Here is a 101-residue protein sequence, read N- to C-terminus: Replication restart protein PriB (101 aa).

Residues Met1–Thr101 form the SSB domain.

It belongs to the PriB family. Homodimer. Interacts with PriA and DnaT. Component of the replication restart primosome. Primosome assembly occurs via a 'hand-off' mechanism. PriA binds to replication forks, subsequently PriB then DnaT bind; DnaT then displaces ssDNA to generate the helicase loading substrate.

In terms of biological role, involved in the restart of stalled replication forks, which reloads the replicative helicase on sites other than the origin of replication; the PriA-PriB pathway is the major replication restart pathway. During primosome assembly it facilitates complex formation between PriA and DnaT on DNA; stabilizes PriA on DNA. Stimulates the DNA unwinding activity of PriA helicase. This is Replication restart protein PriB from Shewanella oneidensis (strain ATCC 700550 / JCM 31522 / CIP 106686 / LMG 19005 / NCIMB 14063 / MR-1).